A 71-amino-acid chain; its full sequence is Conotoxin PnMEKL-032 (71 aa).

A signal peptide spans 1-19 (MQKLIILLLVAAVLMSTQA). Residues 20 to 46 (LFQEKRLKEKINFLSKEKADAEKQQKR) constitute a propeptide that is removed on maturation. 3 disulfide bridges follow: C48–C62, C55–C66, and C61–C70.

It belongs to the conotoxin O2 superfamily. Expressed by the venom duct.

Its subcellular location is the secreted. In Conus pennaceus (Feathered cone), this protein is Conotoxin PnMEKL-032.